The following is a 523-amino-acid chain: uncharacterized protein (523 aa).

Residues 1-63 (MACVSTCLIL…NRHGIAVVKA (63 aa)) constitute a chloroplast transit peptide. 3 consecutive transmembrane segments (helical) span residues 180 to 200 (VSFG…IIAL), 386 to 406 (ALVI…NTLL), and 423 to 443 (IYPL…IRWF).

It localises to the plastid. The protein resides in the chloroplast membrane. This is an uncharacterized protein from Arabidopsis thaliana (Mouse-ear cress).